The chain runs to 248 residues: ATP synthase subunit a, chloroplastic (248 aa).

5 helical membrane passes run 37 to 57 (AQVL…AILA), 96 to 116 (VPFI…GALL), 134 to 154 (DINT…YAGL), 200 to 220 (LVVA…MMFL), and 221 to 241 (GLFT…AYIG).

This sequence belongs to the ATPase A chain family. In terms of assembly, F-type ATPases have 2 components, CF(1) - the catalytic core - and CF(0) - the membrane proton channel. CF(1) has five subunits: alpha(3), beta(3), gamma(1), delta(1), epsilon(1). CF(0) has four main subunits: a, b, b' and c.

Its subcellular location is the plastid. The protein resides in the chloroplast thylakoid membrane. In terms of biological role, key component of the proton channel; it plays a direct role in the translocation of protons across the membrane. The sequence is that of ATP synthase subunit a, chloroplastic from Anthoceros angustus (Hornwort).